The following is a 201-amino-acid chain: PLASMODESMATA CALLOSE-BINDING PROTEIN 1 (201 aa).

Residues 1 to 19 (MAALVLSLLLLSLAGHSSA) form the signal peptide. C22 and C84 are joined by a disulfide. Low complexity predominate over residues 107-141 (SASGSSGSTTVTPGTTNPKGSPTTTTLPGSGTNSP). The tract at residues 107–164 (SASGSSGSTTVTPGTTNPKGSPTTTTLPGSGTNSPYSGNPTNGVFGGNSTGGTTGTGI) is disordered. Residues 150–161 (VFGGNSTGGTTG) are compositionally biased toward gly residues. N-linked (GlcNAc...) asparagine glycosylation is present at N154. Residue S172 is the site of GPI-anchor amidated serine attachment. Residues 173–201 (SAFALKNSSKLFICLLLIASSGFCSFLML) constitute a propeptide, removed in mature form. N179 carries N-linked (GlcNAc...) asparagine glycosylation.

Contains two additional disulfide bonds. Expressed in the shoot apical region and in young leaves but also detected in the laminar and vasculature of mature leaves.

It is found in the cell membrane. The protein localises to the cell junction. It localises to the plasmodesma. Functionally, able to bind (1-&gt;3)-beta-D-glucans (laminarin). Probably involved in cell-to-cell trafficking regulation. This Arabidopsis thaliana (Mouse-ear cress) protein is PLASMODESMATA CALLOSE-BINDING PROTEIN 1 (PDCB1).